The chain runs to 917 residues: Auxin response factor 17 (917 aa).

A DNA-binding region (TF-B3) is located at residues 134–236; that stretch reads FCKTLTASDT…QLLLGIRRAN (103 aa). Residues 571–649 form a disordered region; sequence SVPNALSPFS…RPTAVPVPDP (79 aa). 2 stretches are compositionally biased toward low complexity: residues 576–594 and 604–620; these read LSPFSQLSSPSQSSPMTLQ and SYPDTSMSSLSPSNTST. A PB1 domain is found at 786–870; it reads ATFVKVYKSG…SCIKILSPQE (85 aa).

This sequence belongs to the ARF family. Homodimers and heterodimers.

Its subcellular location is the nucleus. Functionally, auxin response factors (ARFs) are transcriptional factors that bind specifically to the DNA sequence 5'-TGTCTC-3' found in the auxin-responsive promoter elements (AuxREs). This is Auxin response factor 17 (ARF17) from Oryza sativa subsp. indica (Rice).